The primary structure comprises 94 residues: RxLR effector protein PITG_15972 (94 aa).

The N-terminal stretch at 1-21 (MRAVYILAMACAATLQASSSA) is a signal peptide. The RxLR-dEER motif lies at 50–65 (RLLRVEDKEEETEEER).

This sequence belongs to the RxLR effector family.

Its subcellular location is the secreted. The protein localises to the host cytoplasm. It localises to the host nucleus. Its function is as follows. Effector that enhances P.infestans colonization of Nicotiana benthamiana leaves. In Phytophthora infestans (strain T30-4) (Potato late blight agent), this protein is RxLR effector protein PITG_15972.